The primary structure comprises 290 residues: Nucleotide-binding protein BPP4038 (290 aa).

9–16 (GISGSGKS) contacts ATP. Residue 58-61 (DVRS) coordinates GTP.

This sequence belongs to the RapZ-like family.

In terms of biological role, displays ATPase and GTPase activities. The protein is Nucleotide-binding protein BPP4038 of Bordetella parapertussis (strain 12822 / ATCC BAA-587 / NCTC 13253).